Reading from the N-terminus, the 222-residue chain is Large ribosomal subunit protein uL1 (222 aa).

Belongs to the universal ribosomal protein uL1 family. In terms of assembly, part of the 50S ribosomal subunit.

Functionally, binds directly to 23S rRNA. Probably involved in E site tRNA release. In terms of biological role, protein L1 is also a translational repressor protein, it controls the translation of its operon by binding to its mRNA. The chain is Large ribosomal subunit protein uL1 from Pyrobaculum arsenaticum (strain DSM 13514 / JCM 11321 / PZ6).